Reading from the N-terminus, the 357-residue chain is 2-oxoglutarate-dependent dioxygenase 11 (357 aa).

In terms of domain architecture, Fe2OG dioxygenase spans 207–307; that stretch reads QPRGLRMAYY…RISAALFHYP (101 aa). Residues H231, D233, and H288 each contribute to the Fe cation site. R298 is a 2-oxoglutarate binding site.

This sequence belongs to the iron/ascorbate-dependent oxidoreductase family. The cofactor is Fe(2+). L-ascorbate serves as cofactor. Expressed in shoots.

It localises to the cytoplasm. It catalyses the reaction melatonin + 2-oxoglutarate + O2 = 2-hydroxymelatonin + succinate + CO2. Functionally, involved in melatonin degradation. Catalyzes the hydroxylation of melatonin to produce 2-hydroxymelatonin. This Oryza sativa subsp. japonica (Rice) protein is 2-oxoglutarate-dependent dioxygenase 11.